The primary structure comprises 333 residues: Complement C1q and tumor necrosis factor-related protein 9B (333 aa).

Positions 1-19 (MRIWWLLLAIEICTGNINS) are cleaved as a signal peptide. Collagen-like domains are found at residues 24–82 (RQGH…DGKV), 95–154 (GSPG…PGPM), and 155–191 (GPIG…GEKG). Positions 24-189 (RQGHPGIPGN…IRGWKGDRGE (166 aa)) are disordered. The span at 26 to 40 (GHPGIPGNPGHNGLP) shows a compositional bias: low complexity. Composition is skewed to basic and acidic residues over residues 42–55 (RDGR…KGDA) and 69–88 (TSGE…KGIK). The 137-residue stretch at 197 to 333 (LVLPKSAFTV…FTGFLLFSSQ (137 aa)) folds into the C1q domain.

As to quaternary structure, interacts with CTRP9A and ADIPOQ. Forms heterotrimers and heterooligomeric complexes with CTRP9A. As to expression, expressed at low levels. Not expressed in adipose tissues.

It is found in the secreted. Its function is as follows. Probable adipokine. Activates AMPK, AKT, and p44/42 MAPK signaling pathways. The polypeptide is Complement C1q and tumor necrosis factor-related protein 9B (C1QTNF9B) (Homo sapiens (Human)).